A 258-amino-acid chain; its full sequence is Global transcriptional regulator CodY (258 aa).

The GAF domain stretch occupies residues 1–156 (MSTLLSKTRR…SATIVGMELL (156 aa)). The H-T-H motif DNA-binding region spans 204–223 (ASKIADKVGITRSVIVNALR).

Belongs to the CodY family.

It is found in the cytoplasm. In terms of biological role, DNA-binding global transcriptional regulator which is involved in the adaptive response to starvation and acts by directly or indirectly controlling the expression of numerous genes in response to nutrient availability. During rapid exponential growth, CodY is highly active and represses genes whose products allow adaptation to nutrient depletion. This is Global transcriptional regulator CodY from Clostridium perfringens (strain SM101 / Type A).